A 224-amino-acid polypeptide reads, in one-letter code: Large ribosomal subunit protein bL25 (224 aa).

Positions 196 to 224 (VEEVDTDAEEVDAADVPATEQGSEEDKGE) are disordered. Residues 197 to 208 (EEVDTDAEEVDA) are compositionally biased toward acidic residues.

It belongs to the bacterial ribosomal protein bL25 family. CTC subfamily. As to quaternary structure, part of the 50S ribosomal subunit; part of the 5S rRNA/L5/L18/L25 subcomplex. Contacts the 5S rRNA. Binds to the 5S rRNA independently of L5 and L18.

Functionally, this is one of the proteins that binds to the 5S RNA in the ribosome where it forms part of the central protuberance. In Psychrobacter sp. (strain PRwf-1), this protein is Large ribosomal subunit protein bL25.